Consider the following 130-residue polypeptide: Endoglucanase 2 (130 aa).

Active-site residues include His-47, Asp-98, and Glu-107.

Belongs to the glycosyl hydrolase 9 (cellulase E) family.

The enzyme catalyses Endohydrolysis of (1-&gt;4)-beta-D-glucosidic linkages in cellulose, lichenin and cereal beta-D-glucans.. Functionally, involved in ripening fruit process. This is Endoglucanase 2 (CEL2) from Persea americana (Avocado).